The sequence spans 940 residues: Chordin (940 aa).

Residues Met1 to Gly19 form the signal peptide. Residues Ser42–Pro118 enclose the VWFC 1 domain. CHRD domains lie at Thr162–Ala277, Phe279–Ser398, Ser404–Tyr519, and Arg525–His652. 2 N-linked (GlcNAc...) asparagine glycosylation sites follow: Asn347 and Asn430. VWFC domains are found at residues His689–Glu748, Glu767–Pro836, and Arg855–Ile919.

This sequence belongs to the chordin family. In terms of assembly, interacts with twsg1 and/or bmp4. In terms of processing, cleaved by tolloid proteases; cleavage participates in dorsoventral patterning during early development.

It localises to the secreted. Dorsalizing factor. Key developmental protein that dorsalizes early vertebrate embryonic tissues by binding to ventralizing TGF-beta family bone morphogenetic proteins (BMPs) and sequestering them in latent complexes. The sequence is that of Chordin (chd) from Danio rerio (Zebrafish).